A 119-amino-acid polypeptide reads, in one-letter code: Short coiled-coil protein A (119 aa).

Residues 1–10 show a composition bias toward acidic residues; it reads MEGDVDEDDG. Residues 1–26 are disordered; that stretch reads MEGDVDEDDGTFTNISLADDSADGEP. Residues 48–95 are a coiled coil; it reads MENQVEQEEKTRLINQVLELQHTLEDLSARVDAVKEENLKLKSENQVL.

This sequence belongs to the SCOC family.

The protein resides in the golgi apparatus membrane. It is found in the golgi apparatus. It localises to the trans-Golgi network. Its subcellular location is the cytoplasm. The protein localises to the cytosol. Functionally, positive regulator of amino acid starvation-induced autophagy. This is Short coiled-coil protein A (scoca) from Danio rerio (Zebrafish).